The primary structure comprises 276 residues: Probable ribose-5-phosphate isomerase 3, chloroplastic (276 aa).

The transit peptide at M1 to Q39 directs the protein to the chloroplast. Residue S40 is modified to N-acetylserine. The residue at position 108 (S108) is a Phosphoserine.

Belongs to the ribose 5-phosphate isomerase family. In terms of processing, phosphorylated by SRK2C.

The protein resides in the plastid. It localises to the chloroplast. The enzyme catalyses aldehydo-D-ribose 5-phosphate = D-ribulose 5-phosphate. It functions in the pathway carbohydrate degradation; pentose phosphate pathway; D-ribose 5-phosphate from D-ribulose 5-phosphate (non-oxidative stage): step 1/1. Catalyzes the reversible conversion of ribose-5-phosphate to ribulose 5-phosphate. This Arabidopsis thaliana (Mouse-ear cress) protein is Probable ribose-5-phosphate isomerase 3, chloroplastic (RPI3).